Reading from the N-terminus, the 517-residue chain is Splicing factor cactin (517 aa).

Positions 1–14 are enriched in basic and acidic residues; it reads MAFRDSTRDFNRSR. The disordered stretch occupies residues 1–59; that stretch reads MAFRDSTRDFNRSRPEKRHASRSSSPRSFRPSNQNARANYNLPRVRDAMKEEERSRETK. The segment covering 22 to 32 has biased composition (low complexity); that stretch reads RSSSPRSFRPS. Residues 44-59 show a composition bias toward basic and acidic residues; that stretch reads RVRDAMKEEERSRETK.

It belongs to the CACTIN family. In terms of assembly, interacts with sde2. Interacts with cdc5.

Its function is as follows. Plays a role in pre-mRNA splicing by facilitating excision of introns featuring long spacing between the branchpoint and 3'-splice site (ss). Recruited to the spliceosome by sde2, which may enable folding of the RNA between the BP and 3'-ss to guide the splice site towards the spliceosome's catalytic center. Assists the splicing of several components involved in chromatin organization. The chain is Splicing factor cactin from Schizosaccharomyces pombe (strain 972 / ATCC 24843) (Fission yeast).